Reading from the N-terminus, the 241-residue chain is 2,3,4,5-tetrahydropyridine-2,6-dicarboxylate N-acetyltransferase (241 aa).

The protein belongs to the transferase hexapeptide repeat family. DapH subfamily.

The enzyme catalyses (S)-2,3,4,5-tetrahydrodipicolinate + acetyl-CoA + H2O = L-2-acetamido-6-oxoheptanedioate + CoA. It functions in the pathway amino-acid biosynthesis; L-lysine biosynthesis via DAP pathway; LL-2,6-diaminopimelate from (S)-tetrahydrodipicolinate (acetylase route): step 1/3. Functionally, catalyzes the transfer of an acetyl group from acetyl-CoA to tetrahydrodipicolinate. This chain is 2,3,4,5-tetrahydropyridine-2,6-dicarboxylate N-acetyltransferase, found in Caldanaerobacter subterraneus subsp. tengcongensis (strain DSM 15242 / JCM 11007 / NBRC 100824 / MB4) (Thermoanaerobacter tengcongensis).